The following is a 113-amino-acid chain: Nucleoid-associated protein P9303_00241 (113 aa).

Residues 90–113 (TTTMKEQMEELTGGLNLNLPGMSD) form a disordered region.

The protein belongs to the YbaB/EbfC family. Homodimer.

Its subcellular location is the cytoplasm. It localises to the nucleoid. Binds to DNA and alters its conformation. May be involved in regulation of gene expression, nucleoid organization and DNA protection. The chain is Nucleoid-associated protein P9303_00241 from Prochlorococcus marinus (strain MIT 9303).